Consider the following 390-residue polypeptide: Sorting nexin C1711.11 (390 aa).

One can recognise a PX domain in the interval 1–123 (MLKCTIKNEQ…QFLENNSWKS (123 aa)). Positions 44, 70, and 89 each coordinate a 1,2-diacyl-sn-glycero-3-phospho-(1D-myo-inositol-3-phosphate).

The protein belongs to the sorting nexin family.

It is found in the cytoplasm. It localises to the membrane. This chain is Sorting nexin C1711.11, found in Schizosaccharomyces pombe (strain 972 / ATCC 24843) (Fission yeast).